Reading from the N-terminus, the 469-residue chain is 3-isopropylmalate dehydratase large subunit (469 aa).

Residues Cys349, Cys410, and Cys413 each contribute to the [4Fe-4S] cluster site.

The protein belongs to the aconitase/IPM isomerase family. LeuC type 1 subfamily. Heterodimer of LeuC and LeuD. [4Fe-4S] cluster serves as cofactor.

The catalysed reaction is (2R,3S)-3-isopropylmalate = (2S)-2-isopropylmalate. It participates in amino-acid biosynthesis; L-leucine biosynthesis; L-leucine from 3-methyl-2-oxobutanoate: step 2/4. Catalyzes the isomerization between 2-isopropylmalate and 3-isopropylmalate, via the formation of 2-isopropylmaleate. The chain is 3-isopropylmalate dehydratase large subunit from Aromatoleum aromaticum (strain DSM 19018 / LMG 30748 / EbN1) (Azoarcus sp. (strain EbN1)).